The chain runs to 184 residues: NEDD8-conjugating enzyme Ubc12 (184 aa).

The UBC core domain maps to 30 to 175; sequence AGELRLHKDI…VRRAMTGGYV (146 aa). The active-site Glycyl thioester intermediate is Cys-113.

This sequence belongs to the ubiquitin-conjugating enzyme family. UBC12 subfamily. As to quaternary structure, interacts with RBX1. In terms of tissue distribution, expressed in shoot, root and floral meristems, and in vascular tissues of leaves.

It functions in the pathway protein modification; protein neddylation. Its function is as follows. Accepts the ubiquitin-like protein NEDD8/RUB1 from the ECR1-AXR1 E1 complex and catalyzes its covalent attachment to other proteins. In Arabidopsis thaliana (Mouse-ear cress), this protein is NEDD8-conjugating enzyme Ubc12 (RCE1).